The chain runs to 379 residues: tRNA(Met) cytidine acetate ligase (379 aa).

Residues 7–20 (ITEY…HQYH), glycine 100, asparagine 153, and arginine 178 contribute to the ATP site.

Belongs to the TmcAL family.

Its subcellular location is the cytoplasm. It carries out the reaction cytidine(34) in elongator tRNA(Met) + acetate + ATP = N(4)-acetylcytidine(34) in elongator tRNA(Met) + AMP + diphosphate. In terms of biological role, catalyzes the formation of N(4)-acetylcytidine (ac(4)C) at the wobble position of elongator tRNA(Met), using acetate and ATP as substrates. First activates an acetate ion to form acetyladenylate (Ac-AMP) and then transfers the acetyl group to tRNA to form ac(4)C34. The protein is tRNA(Met) cytidine acetate ligase of Staphylococcus aureus (strain MRSA252).